Consider the following 144-residue polypeptide: Maximins 3/H2 (144 aa).

The signal sequence occupies residues 1–18 (MNFKYIVAVSFLIASAYA). 2 consecutive propeptides follow at residues 19-43 (RSVQ…REIR) and 74-123 (TAEE…KEKR). Ile143 carries the post-translational modification Isoleucine amide.

The protein belongs to the bombinin family. Expressed by the skin glands.

It localises to the secreted. In terms of biological role, maximin-3 shows antibacterial activity against both Gram-positive and Gram-negative bacteria. It also shows antimicrobial activity against the fungus C.albicans, but not against A.flavus nor P.uticale. It has little hemolytic activity. It possess a significant cytotoxicity against tumor cell lines. It possess a significant anti-HIV activity. It shows high spermicidal activity. Its function is as follows. Maximin-H2 shows antibacterial activity against both Gram-positive and Gram-negative bacteria. It also shows antimicrobial activity against the fungus C.albicans. Shows strong hemolytic activity. In Bombina maxima (Giant fire-bellied toad), this protein is Maximins 3/H2.